Consider the following 337-residue polypeptide: ATP-dependent 6-phosphofructokinase (337 aa).

Gly11 contributes to the ATP binding site. 21–25 (RAVVR) lines the ADP pocket. Residues 72–73 (RY) and 102–105 (GDGS) each bind ATP. Asp103 is a Mg(2+) binding site. A substrate-binding site is contributed by 125–127 (TID). Asp127 serves as the catalytic Proton acceptor. Arg154 provides a ligand contact to ADP. Substrate-binding positions include Arg162 and 169–171 (MGR). Residues 185 to 187 (GAD), Lys212, and 214 to 216 (KNH) contribute to the ADP site. Residues Glu223, Arg245, and 251-254 (HILR) contribute to the substrate site.

This sequence belongs to the phosphofructokinase type A (PFKA) family. ATP-dependent PFK group I subfamily. Prokaryotic clade 'B1' sub-subfamily. As to quaternary structure, homotetramer. It depends on Mg(2+) as a cofactor.

It localises to the cytoplasm. It carries out the reaction beta-D-fructose 6-phosphate + ATP = beta-D-fructose 1,6-bisphosphate + ADP + H(+). It functions in the pathway carbohydrate degradation; glycolysis; D-glyceraldehyde 3-phosphate and glycerone phosphate from D-glucose: step 3/4. Allosterically activated by ADP and other diphosphonucleosides, and allosterically inhibited by phosphoenolpyruvate. Catalyzes the phosphorylation of D-fructose 6-phosphate to fructose 1,6-bisphosphate by ATP, the first committing step of glycolysis. The chain is ATP-dependent 6-phosphofructokinase from Streptococcus pyogenes serotype M28 (strain MGAS6180).